Reading from the N-terminus, the 104-residue chain is MTTNAPAGSSAAAGSSRRLQQTQNQVDEVVDIMRVNVDKVLERDQKLSELDDRADALQAGASQFETSAAKLKRKYWWKNCKMWAIGITVVVIIIIIIVVWSISS.

Residues 1 to 23 (MTTNAPAGSSAAAGSSRRLQQTQ) form a disordered region. The Cytoplasmic portion of the chain corresponds to 1-81 (MTTNAPAGSS…KRKYWWKNCK (81 aa)). A compositionally biased stretch (low complexity) spans 7–16 (AGSSAAAGSS). Residues 18-78 (RLQQTQNQVD…AKLKRKYWWK (61 aa)) enclose the v-SNARE coiled-coil homology domain. Glycyl lysine isopeptide (Lys-Gly) (interchain with G-Cter in ubiquitin) cross-links involve residues lysine 70, lysine 72, and lysine 81. The helical; Anchor for type IV membrane protein transmembrane segment at 82–102 (MWAIGITVVVIIIIIIVVWSI) threads the bilayer. Residues 103 to 104 (SS) lie on the Vesicular side of the membrane.

This sequence belongs to the synaptobrevin family. In terms of assembly, interacts with POPDC1 (via the C-terminus cytoplasmic tail). Interacts with BCAP31; involved in VAMP3 export from the endoplasmic reticulum. Interacts with BAIAP3; this interaction is increased in the presence of calcium. Interacts with PICALM. Ubiquitinated by RNF167 at Lys-70, Lys-72 and Lys-81, regulating the recycling endosome pathway.

It localises to the early endosome membrane. It is found in the recycling endosome membrane. The protein resides in the synapse. The protein localises to the synaptosome. Its function is as follows. SNARE involved in vesicular transport from the late endosomes to the trans-Golgi network. This is Vesicle-associated membrane protein 3 (VAMP3) from Bos taurus (Bovine).